A 155-amino-acid chain; its full sequence is Pathogenesis-related protein STH-2 (155 aa).

Belongs to the BetVI family.

The polypeptide is Pathogenesis-related protein STH-2 (STH-2) (Solanum tuberosum (Potato)).